We begin with the raw amino-acid sequence, 347 residues long: Tetracycline resistance determinant (347 aa).

The next 8 helical transmembrane spans lie at 3-20 (VLGA…LIVA), 30-52 (SPAA…PVEL), 73-95 (CSAV…PLFL), 108-130 (LVVI…LIAS), 137-156 (LAIV…ATTG), 161-183 (MWGI…TVIT), 204-226 (CAGQ…AVAL), and 294-316 (GFHI…TWFL). Residues 321–347 (EETAPEEERPAESGAGAKNGPLPASDA) form a disordered region.

Belongs to the major facilitator superfamily. TCR/Tet family.

It localises to the cell membrane. Functionally, resistance to tetracycline by an active tetracycline efflux. This is an energy-dependent process that decreases the accumulation of the antibiotic in whole cells. This protein functions as a metal-tetracycline/H(+) antiporter. In Streptomyces rimosus, this protein is Tetracycline resistance determinant (tetB).